A 664-amino-acid polypeptide reads, in one-letter code: Methionine--tRNA ligase (664 aa).

Residues 15–25 (YYPSGKLHIGH) carry the 'HIGH' region motif. A 'KMSKS' region motif is present at residues 311–315 (KMSKS). Lysine 314 lines the ATP pocket. Residues 536-556 (MQGSAPAKEETKEEEPQEVDR) are disordered. In terms of domain architecture, tRNA-binding spans 570–662 (LRVAEVIEAE…IDQSLPKGTR (93 aa)).

The protein belongs to the class-I aminoacyl-tRNA synthetase family. MetG type 2B subfamily. As to quaternary structure, homodimer.

The protein localises to the cytoplasm. The enzyme catalyses tRNA(Met) + L-methionine + ATP = L-methionyl-tRNA(Met) + AMP + diphosphate. Its function is as follows. Is required not only for elongation of protein synthesis but also for the initiation of all mRNA translation through initiator tRNA(fMet) aminoacylation. The polypeptide is Methionine--tRNA ligase (metG) (Bacillus subtilis (strain 168)).